A 570-amino-acid polypeptide reads, in one-letter code: Periplasmic trehalase (570 aa).

An N-terminal signal peptide occupies residues Met-1–Ala-34. Substrate contacts are provided by residues Arg-159, Trp-166 to Asp-167, Asn-203, Arg-212 to Gln-214, Arg-284 to Glu-286, and Gly-317. Active-site proton donor/acceptor residues include Asp-319 and Glu-503. Substrate is bound at residue Glu-518. The tract at residues Lys-544 to Gln-570 is disordered. The span at Pro-554–Gln-570 shows a compositional bias: low complexity.

It belongs to the glycosyl hydrolase 37 family. In terms of assembly, monomer.

Its subcellular location is the periplasm. It catalyses the reaction alpha,alpha-trehalose + H2O = alpha-D-glucose + beta-D-glucose. Provides the cells with the ability to utilize trehalose at high osmolarity by splitting it into glucose molecules that can subsequently be taken up by the phosphotransferase-mediated uptake system. This is Periplasmic trehalase from Salmonella typhimurium (strain LT2 / SGSC1412 / ATCC 700720).